The chain runs to 344 residues: N-acetyl-gamma-glutamyl-phosphate reductase (344 aa).

The active site involves C150.

This sequence belongs to the NAGSA dehydrogenase family. Type 1 subfamily.

It localises to the cytoplasm. The catalysed reaction is N-acetyl-L-glutamate 5-semialdehyde + phosphate + NADP(+) = N-acetyl-L-glutamyl 5-phosphate + NADPH + H(+). The protein operates within amino-acid biosynthesis; L-arginine biosynthesis; N(2)-acetyl-L-ornithine from L-glutamate: step 3/4. In terms of biological role, catalyzes the NADPH-dependent reduction of N-acetyl-5-glutamyl phosphate to yield N-acetyl-L-glutamate 5-semialdehyde. This chain is N-acetyl-gamma-glutamyl-phosphate reductase, found in Pseudomonas putida (strain ATCC 700007 / DSM 6899 / JCM 31910 / BCRC 17059 / LMG 24140 / F1).